The chain runs to 219 residues: Probable transcriptional regulator flp (219 aa).

The 69-residue stretch at 144 to 212 folds into the HTH crp-type domain; that stretch reads DSINVRLTHY…GKQVRILNAE (69 aa). Positions 191-210 form a DNA-binding region, H-T-H motif; that stretch reads KRLAEEKLIERSGKQVRILN.

The polypeptide is Probable transcriptional regulator flp (flp) (Lacticaseibacillus casei (Lactobacillus casei)).